A 148-amino-acid chain; its full sequence is UPF0178 protein BH16190 (148 aa).

The protein belongs to the UPF0178 family.

In Bartonella henselae (strain ATCC 49882 / DSM 28221 / CCUG 30454 / Houston 1) (Rochalimaea henselae), this protein is UPF0178 protein BH16190.